A 195-amino-acid polypeptide reads, in one-letter code: PRELI domain containing protein 3B (195 aa).

The PRELI/MSF1 domain occupies 1 to 172 (MKIWTSEHVF…VIHKLNAEIE (172 aa)). Phosphoserine is present on residues serine 46 and serine 51.

Belongs to the slowmo family.

This chain is PRELI domain containing protein 3B (PRELID3B), found in Cricetulus griseus (Chinese hamster).